A 571-amino-acid chain; its full sequence is MTLNGWIQIALYGAIVLALVKPLGSYMTRVFTGERTFLSPVLGPIERGLYRVSGIDDRQEQHWLAYTGAVILFHVLGFAVLYAILRLQAVLPLNPADQTAVAPDLAFNTSTSFITNTNWQSYGGETTLSYLSQMLGLTHQNFLSAATGIAVAVALIRGFARASSGTIGSFWVDVTRATLYVLLPICVPYTLFLVWQGIPQTLGAYADATTLEGAKQTIALGPVASQVAIKMLGTNGGGFFNANAAHPFENPTALSNLVQMVSIFAIGAALTNVFGRMVGDERQGWAILGAMGILFLAGVLVTYWAEAHGSSVLNSFGLTGGNMEGKETRFGIAASALFAVITTAASCGAVNAMHDSFTALGGLIPLLNMQLGEIIIGGVGAGLYGMLIFVIVAIFVAGLMVGRTPEYLGKKIEAKEVKMAMLGILCLPLMMLGFTALATVVPAGLAGPANAGPHGFTEILYAYTSAAANNGSAFGGLTANTLFYNSTLAIGMLVGRFFVKIPVLAIAGSLAAKKTVPASAGTFPTHGGLFVGLLVGVILIIGGLTFFPSLALGPVVEHLAGAAGQTFATGG.

11 helical membrane-spanning segments follow: residues Gly5 to Ser25, Leu64 to Ile84, Gly136 to Ile156, Leu179 to Pro199, Leu254 to Phe274, Trp285 to Ala305, Phe330 to Val350, Phe357 to Ile376, Met421 to Val441, Leu488 to Gly508, and Gly527 to Phe547.

It belongs to the KdpA family. As to quaternary structure, the system is composed of three essential subunits: KdpA, KdpB and KdpC.

Its subcellular location is the cell inner membrane. Its function is as follows. Part of the high-affinity ATP-driven potassium transport (or Kdp) system, which catalyzes the hydrolysis of ATP coupled with the electrogenic transport of potassium into the cytoplasm. This subunit binds the periplasmic potassium ions and delivers the ions to the membrane domain of KdpB through an intramembrane tunnel. This is Potassium-transporting ATPase potassium-binding subunit from Methylobacterium radiotolerans (strain ATCC 27329 / DSM 1819 / JCM 2831 / NBRC 15690 / NCIMB 10815 / 0-1).